A 92-amino-acid polypeptide reads, in one-letter code: Anti-restriction endonuclease (92 aa).

Its function is as follows. Pays a role in the inhibition of the host restriction-modification system. Strongly inhibits the host mcrA endonuclease that cleaves 5-methyl and 5-hydroxymethylcytosines at the specific DNA sequence C(me)CGG. In Enterobacteria phage T4 (Bacteriophage T4), this protein is Anti-restriction endonuclease (arn).